The chain runs to 270 residues: Probable 6-oxopurine nucleoside phosphorylase (270 aa).

Phosphate is bound by residues Ser10 and 48-49 (RH). Met191 is a substrate binding site. Thr192 provides a ligand contact to phosphate. 215–217 (NYA) contributes to the substrate binding site.

This sequence belongs to the PNP/MTAP phosphorylase family. MTAP subfamily. As to quaternary structure, homohexamer. Dimer of a homotrimer.

The enzyme catalyses a purine D-ribonucleoside + phosphate = a purine nucleobase + alpha-D-ribose 1-phosphate. Its pathway is purine metabolism; purine nucleoside salvage. Purine nucleoside phosphorylase which is highly specific for 6-oxopurine nucleosides. Cleaves guanosine or inosine to respective bases and sugar-1-phosphate molecules. Involved in purine salvage. The chain is Probable 6-oxopurine nucleoside phosphorylase from Korarchaeum cryptofilum (strain OPF8).